A 1071-amino-acid chain; its full sequence is DNA-directed RNA polymerase subunit beta (1071 aa).

Belongs to the RNA polymerase beta chain family. In terms of assembly, in plastids the minimal PEP RNA polymerase catalytic core is composed of four subunits: alpha, beta, beta', and beta''. When a (nuclear-encoded) sigma factor is associated with the core the holoenzyme is formed, which can initiate transcription.

It is found in the plastid. It localises to the chloroplast. The enzyme catalyses RNA(n) + a ribonucleoside 5'-triphosphate = RNA(n+1) + diphosphate. Functionally, DNA-dependent RNA polymerase catalyzes the transcription of DNA into RNA using the four ribonucleoside triphosphates as substrates. This chain is DNA-directed RNA polymerase subunit beta, found in Acorus calamus (Sweet flag).